An 89-amino-acid chain; its full sequence is Acylphosphatase (89 aa).

Residues 4-89 (SRRFLVSGTV…EQPPEGFRVL (86 aa)) enclose the Acylphosphatase-like domain. Active-site residues include R19 and N37.

The protein belongs to the acylphosphatase family.

The enzyme catalyses an acyl phosphate + H2O = a carboxylate + phosphate + H(+). The polypeptide is Acylphosphatase (acyP) (Alkalilimnicola ehrlichii (strain ATCC BAA-1101 / DSM 17681 / MLHE-1)).